A 214-amino-acid polypeptide reads, in one-letter code: Charged multivesicular body protein 2b-A (214 aa).

Positions 25–55 (QRAITRDRTALEKQEKQLEMEIKKMAKAGNK) form a coiled coil. Residues 178–214 (MAKAPSAAKGLPSASASKSTGISDEEIERQLKALGVD) are disordered. An MIT-interacting motif motif is present at residues 202–212 (EEIERQLKALG).

It belongs to the SNF7 family. As to quaternary structure, probable core component of the endosomal sorting required for transport complex III (ESCRT-III). ESCRT-III components are thought to multimerize to form a flat lattice on the perimeter membrane of the endosome.

Its subcellular location is the cytoplasm. It is found in the cytosol. The protein resides in the late endosome membrane. Functionally, probable core component of the endosomal sorting required for transport complex III (ESCRT-III) which is involved in multivesicular bodies (MVBs) formation and sorting of endosomal cargo proteins into MVBs. MVBs contain intraluminal vesicles (ILVs) that are generated by invagination and scission from the limiting membrane of the endosome and mostly are delivered to lysosomes enabling degradation of membrane proteins, such as stimulated growth factor receptors, lysosomal enzymes and lipids. The protein is Charged multivesicular body protein 2b-A (chmp2b-a) of Xenopus laevis (African clawed frog).